Here is a 145-residue protein sequence, read N- to C-terminus: SsrA-binding protein (145 aa).

Belongs to the SmpB family.

The protein localises to the cytoplasm. Its function is as follows. Required for rescue of stalled ribosomes mediated by trans-translation. Binds to transfer-messenger RNA (tmRNA), required for stable association of tmRNA with ribosomes. tmRNA and SmpB together mimic tRNA shape, replacing the anticodon stem-loop with SmpB. tmRNA is encoded by the ssrA gene; the 2 termini fold to resemble tRNA(Ala) and it encodes a 'tag peptide', a short internal open reading frame. During trans-translation Ala-aminoacylated tmRNA acts like a tRNA, entering the A-site of stalled ribosomes, displacing the stalled mRNA. The ribosome then switches to translate the ORF on the tmRNA; the nascent peptide is terminated with the 'tag peptide' encoded by the tmRNA and targeted for degradation. The ribosome is freed to recommence translation, which seems to be the essential function of trans-translation. The sequence is that of SsrA-binding protein from Mycoplasma genitalium (strain ATCC 33530 / DSM 19775 / NCTC 10195 / G37) (Mycoplasmoides genitalium).